Reading from the N-terminus, the 621-residue chain is UvrABC system protein C (621 aa).

The 87-residue stretch at threonine 20–isoleucine 106 folds into the GIY-YIG domain. The region spanning lysine 212–methionine 247 is the UVR domain.

The protein belongs to the UvrC family. In terms of assembly, interacts with UvrB in an incision complex.

The protein localises to the cytoplasm. Its function is as follows. The UvrABC repair system catalyzes the recognition and processing of DNA lesions. UvrC both incises the 5' and 3' sides of the lesion. The N-terminal half is responsible for the 3' incision and the C-terminal half is responsible for the 5' incision. The protein is UvrABC system protein C of Helicobacter hepaticus (strain ATCC 51449 / 3B1).